The chain runs to 843 residues: Pullulanase (843 aa).

Positions 1–19 (MKTKLWLLLVLLLSALIFS) are cleaved as a signal peptide. Catalysis depends on D535, which acts as the Nucleophile. Residue E564 is the Proton donor of the active site.

It belongs to the glycosyl hydrolase 13 family.

The enzyme catalyses Hydrolysis of (1-&gt;6)-alpha-D-glucosidic linkages in pullulan, amylopectin and glycogen, and in the alpha- and beta-limit dextrins of amylopectin and glycogen.. The polypeptide is Pullulanase (pulA) (Thermotoga maritima (strain ATCC 43589 / DSM 3109 / JCM 10099 / NBRC 100826 / MSB8)).